Consider the following 562-residue polypeptide: Glutamine--tRNA ligase (562 aa).

Residues 35-45 carry the 'HIGH' region motif; sequence PEPNGYLHIGH. Residues 36-38 and 42-48 each bind ATP; these read EPN and HIGHAKS. L-glutamine-binding residues include aspartate 68 and tyrosine 213. Residues threonine 232, 262–263, and 270–272 each bind ATP; these read RL and LSK. Residues 269 to 273 carry the 'KMSKS' region motif; it reads ILSKR.

Belongs to the class-I aminoacyl-tRNA synthetase family. Monomer.

Its subcellular location is the cytoplasm. The enzyme catalyses tRNA(Gln) + L-glutamine + ATP = L-glutaminyl-tRNA(Gln) + AMP + diphosphate. This chain is Glutamine--tRNA ligase, found in Buchnera aphidicola subsp. Schizaphis graminum (strain Sg).